The following is a 181-amino-acid chain: Inner membrane-spanning protein YciB (181 aa).

5 helical membrane passes run 22–42 (IYTATGALIIATAIQLVVTYA), 50–70 (MQLITFIMVTVFGGMTIFLHD), 80–100 (IVYCVFAAGLIIAHILGKPVI), 122–142 (WVLFFTVCAIANLYVAFEMPL), and 148–168 (FKVFGLLGLTFLYTLFTGMYV).

Belongs to the YciB family.

Its subcellular location is the cell inner membrane. Functionally, plays a role in cell envelope biogenesis, maintenance of cell envelope integrity and membrane homeostasis. The polypeptide is Inner membrane-spanning protein YciB (Aliivibrio fischeri (strain MJ11) (Vibrio fischeri)).